A 330-amino-acid chain; its full sequence is Ketol-acid reductoisomerase (NADP(+)) (330 aa).

A KARI N-terminal Rossmann domain is found at 1 to 181 (MNVYYEQDAD…GGAKAGVIET (181 aa)). Residues 24–27 (YGSQ), R47, S50, S52, and 82–85 (DQYQ) each bind NADP(+). Residue H107 is part of the active site. G133 contributes to the NADP(+) binding site. The 146-residue stretch at 182–327 (TIKDETETDL…AKLRNMMSWL (146 aa)) folds into the KARI C-terminal knotted domain. Mg(2+) contacts are provided by D190, E194, E226, and E230. S251 is a binding site for substrate.

The protein belongs to the ketol-acid reductoisomerase family. Requires Mg(2+) as cofactor.

The enzyme catalyses (2R)-2,3-dihydroxy-3-methylbutanoate + NADP(+) = (2S)-2-acetolactate + NADPH + H(+). The catalysed reaction is (2R,3R)-2,3-dihydroxy-3-methylpentanoate + NADP(+) = (S)-2-ethyl-2-hydroxy-3-oxobutanoate + NADPH + H(+). It functions in the pathway amino-acid biosynthesis; L-isoleucine biosynthesis; L-isoleucine from 2-oxobutanoate: step 2/4. It participates in amino-acid biosynthesis; L-valine biosynthesis; L-valine from pyruvate: step 2/4. In terms of biological role, involved in the biosynthesis of branched-chain amino acids (BCAA). Catalyzes an alkyl-migration followed by a ketol-acid reduction of (S)-2-acetolactate (S2AL) to yield (R)-2,3-dihydroxy-isovalerate. In the isomerase reaction, S2AL is rearranged via a Mg-dependent methyl migration to produce 3-hydroxy-3-methyl-2-ketobutyrate (HMKB). In the reductase reaction, this 2-ketoacid undergoes a metal-dependent reduction by NADPH to yield (R)-2,3-dihydroxy-isovalerate. The chain is Ketol-acid reductoisomerase (NADP(+)) from Prosthecochloris aestuarii (strain DSM 271 / SK 413).